We begin with the raw amino-acid sequence, 133 residues long: UPF0292 protein TON_0187 (133 aa).

Positions 20-100 constitute a Toprim domain; the sequence is EGAIIVEGPR…RVDSETRKEL (81 aa). The Mg(2+) site is built by E26, D69, and D71.

It belongs to the UPF0292 family. Mg(2+) serves as cofactor.

The sequence is that of UPF0292 protein TON_0187 from Thermococcus onnurineus (strain NA1).